The chain runs to 102 residues: NADH-quinone oxidoreductase subunit K (102 aa).

The next 3 membrane-spanning stretches (helical) occupy residues 5-25 (LAHY…GIFV), 30-50 (IIVI…NLVA), and 62-82 (IFAM…LAIL).

The protein belongs to the complex I subunit 4L family. As to quaternary structure, NDH-1 is composed of 14 different subunits. Subunits NuoA, H, J, K, L, M, N constitute the membrane sector of the complex.

The protein localises to the cell inner membrane. It carries out the reaction a quinone + NADH + 5 H(+)(in) = a quinol + NAD(+) + 4 H(+)(out). In terms of biological role, NDH-1 shuttles electrons from NADH, via FMN and iron-sulfur (Fe-S) centers, to quinones in the respiratory chain. The immediate electron acceptor for the enzyme in this species is believed to be ubiquinone. Couples the redox reaction to proton translocation (for every two electrons transferred, four hydrogen ions are translocated across the cytoplasmic membrane), and thus conserves the redox energy in a proton gradient. In Phenylobacterium zucineum (strain HLK1), this protein is NADH-quinone oxidoreductase subunit K.